The following is a 651-amino-acid chain: Acetyl-coenzyme A synthetase (651 aa).

CoA-binding positions include 189 to 192 (RGGK), T311, and N335. Residues 387–389 (GEP), 411–416 (DTWWQT), D500, and R515 each bind ATP. S523 is a binding site for CoA. R526 provides a ligand contact to ATP. Residues V537, H539, and V542 each coordinate Mg(2+). R584 is a CoA binding site. Position 609 is an N6-acetyllysine (K609).

It belongs to the ATP-dependent AMP-binding enzyme family. Requires Mg(2+) as cofactor. In terms of processing, acetylated. Deacetylation by the SIR2-homolog deacetylase activates the enzyme.

It catalyses the reaction acetate + ATP + CoA = acetyl-CoA + AMP + diphosphate. Its function is as follows. Catalyzes the conversion of acetate into acetyl-CoA (AcCoA), an essential intermediate at the junction of anabolic and catabolic pathways. AcsA undergoes a two-step reaction. In the first half reaction, AcsA combines acetate with ATP to form acetyl-adenylate (AcAMP) intermediate. In the second half reaction, it can then transfer the acetyl group from AcAMP to the sulfhydryl group of CoA, forming the product AcCoA. In Agrobacterium fabrum (strain C58 / ATCC 33970) (Agrobacterium tumefaciens (strain C58)), this protein is Acetyl-coenzyme A synthetase.